The chain runs to 692 residues: Acyl-coenzyme A oxidase 2, peroxisomal (692 aa).

Residues 1–49 constitute a peroxisome transit peptide; it reads MESRREKNPMTEEESDGLIAARRIQRLSLHLSPSLTPSPSLPLVQTETC. Thr-186, Ser-192, Gly-225, Arg-365, Gln-384, Gly-452, and Thr-473 together coordinate FAD. Glu-475 (proton acceptor) is an active-site residue. Residue Asp-477 coordinates FAD.

It belongs to the acyl-CoA oxidase family. In terms of assembly, homodimer. It depends on FAD as a cofactor. As to expression, expressed mainly in flowers and young seedlings. Lower expression in roots, leaves and bracts.

The protein resides in the peroxisome. The enzyme catalyses a 2,3-saturated acyl-CoA + O2 = a (2E)-enoyl-CoA + H2O2. Functionally, catalyzes the desaturation of long-chain acyl-CoAs to 2-trans-enoyl-CoAs. Active on substrates longer than C14 and mostly with C18-CoA. Activity on long-chain mono-unsaturated substrates is double than with the corresponding saturated substrates. This Arabidopsis thaliana (Mouse-ear cress) protein is Acyl-coenzyme A oxidase 2, peroxisomal.